The chain runs to 460 residues: Phosphomethylpyrimidine synthase (460 aa).

Residues asparagine 80, methionine 109, tyrosine 139, histidine 175, 195–197 (SRG), 236–239 (DSLR), and glutamate 275 contribute to the substrate site. Histidine 279 serves as a coordination point for Zn(2+). Tyrosine 302 is a binding site for substrate. Residue histidine 343 coordinates Zn(2+). Cysteine 423, cysteine 426, and cysteine 431 together coordinate [4Fe-4S] cluster.

The protein belongs to the ThiC family. [4Fe-4S] cluster serves as cofactor.

It carries out the reaction 5-amino-1-(5-phospho-beta-D-ribosyl)imidazole + S-adenosyl-L-methionine = 4-amino-2-methyl-5-(phosphooxymethyl)pyrimidine + CO + 5'-deoxyadenosine + formate + L-methionine + 3 H(+). The protein operates within cofactor biosynthesis; thiamine diphosphate biosynthesis. Functionally, catalyzes the synthesis of the hydroxymethylpyrimidine phosphate (HMP-P) moiety of thiamine from aminoimidazole ribotide (AIR) in a radical S-adenosyl-L-methionine (SAM)-dependent reaction. This is Phosphomethylpyrimidine synthase from Rippkaea orientalis (strain PCC 8801 / RF-1) (Cyanothece sp. (strain PCC 8801)).